Here is a 490-residue protein sequence, read N- to C-terminus: Cytochrome P450 2C6 (490 aa).

2 positions are modified to N6-acetyllysine: K249 and K375. Heme is bound at residue C435.

The protein belongs to the cytochrome P450 family. The cofactor is heme.

Its subcellular location is the endoplasmic reticulum membrane. It is found in the microsome membrane. It catalyses the reaction an organic molecule + reduced [NADPH--hemoprotein reductase] + O2 = an alcohol + oxidized [NADPH--hemoprotein reductase] + H2O + H(+). In terms of biological role, cytochromes P450 are a group of heme-thiolate monooxygenases. In liver microsomes, this enzyme is involved in an NADPH-dependent electron transport pathway. It oxidizes a variety of structurally unrelated compounds, including steroids, fatty acids, and xenobiotics. The protein is Cytochrome P450 2C6 (Cyp2c6) of Rattus norvegicus (Rat).